An 828-amino-acid polypeptide reads, in one-letter code: Beta-galactosidase (828 aa).

Positions 1-20 (MKMKQFNLLSLFLILITSFG) are cleaved as a signal peptide. N-linked (GlcNAc...) asparagine glycans are attached at residues Asn-23 and Asn-153. Glu-183 serves as the catalytic Proton donor. The active-site Nucleophile is Glu-252. N-linked (GlcNAc...) asparagine glycans are attached at residues Asn-253, Asn-350, Asn-379, Asn-492, Asn-667, Asn-799, and Asn-803. In terms of domain architecture, SUEL-type lectin spans 742-828 (AHEHNKVELS…PKRLFVEVEC (87 aa)).

It belongs to the glycosyl hydrolase 35 family.

The protein resides in the secreted. It is found in the extracellular space. It localises to the apoplast. It catalyses the reaction Hydrolysis of terminal non-reducing beta-D-galactose residues in beta-D-galactosides.. The sequence is that of Beta-galactosidase from Brassica oleracea (Wild cabbage).